We begin with the raw amino-acid sequence, 204 residues long: Transmembrane protein 186 (204 aa).

The Mitochondrial matrix portion of the chain corresponds to 1–69 (MLELLCRVSP…RLVAALSRLK (69 aa)). The helical transmembrane segment at 70–90 (VYQAVITAAGTPIVFALGSAG) threads the bilayer. At 91-95 (QLSTD) the chain is on the mitochondrial intermembrane side. A helical transmembrane segment spans residues 96-116 (ALAIYAAIGVTGLITLTLASY). The Mitochondrial matrix portion of the chain corresponds to 117 to 204 (ASSNLVGFIY…RQLFEGLFGN (88 aa)).

It belongs to the TMEM186 family. In terms of assembly, associates with mitochondrial complex I assembly intermediates during its biogenesis.

Its subcellular location is the mitochondrion inner membrane. Its function is as follows. As part of the MCIA complex, required for efficient assembly of the mitochondrial complex I. In Drosophila melanogaster (Fruit fly), this protein is Transmembrane protein 186.